The following is a 559-amino-acid chain: Formate--tetrahydrofolate ligase (559 aa).

68-75 (TPAGEGKT) is an ATP binding site.

It belongs to the formate--tetrahydrofolate ligase family.

It catalyses the reaction (6S)-5,6,7,8-tetrahydrofolate + formate + ATP = (6R)-10-formyltetrahydrofolate + ADP + phosphate. The protein operates within one-carbon metabolism; tetrahydrofolate interconversion. The polypeptide is Formate--tetrahydrofolate ligase (Sinorhizobium fredii (strain NBRC 101917 / NGR234)).